A 201-amino-acid polypeptide reads, in one-letter code: Imidazoleglycerol-phosphate dehydratase (201 aa).

Belongs to the imidazoleglycerol-phosphate dehydratase family.

The protein localises to the cytoplasm. The enzyme catalyses D-erythro-1-(imidazol-4-yl)glycerol 3-phosphate = 3-(imidazol-4-yl)-2-oxopropyl phosphate + H2O. Its pathway is amino-acid biosynthesis; L-histidine biosynthesis; L-histidine from 5-phospho-alpha-D-ribose 1-diphosphate: step 6/9. The chain is Imidazoleglycerol-phosphate dehydratase from Prochlorococcus marinus (strain AS9601).